A 431-amino-acid chain; its full sequence is Glutamate--tRNA ligase 1 (431 aa).

A 'HIGH' region motif is present at residues 6-16 (PSPTGDMHIGN). The 'KMSKS' region motif lies at 235-239 (KMSKR). Lys-238 provides a ligand contact to ATP.

The protein belongs to the class-I aminoacyl-tRNA synthetase family. Glutamate--tRNA ligase type 1 subfamily. As to quaternary structure, monomer.

It localises to the cytoplasm. It carries out the reaction tRNA(Glu) + L-glutamate + ATP = L-glutamyl-tRNA(Glu) + AMP + diphosphate. In terms of biological role, catalyzes the attachment of glutamate to tRNA(Glu) in a two-step reaction: glutamate is first activated by ATP to form Glu-AMP and then transferred to the acceptor end of tRNA(Glu). This is Glutamate--tRNA ligase 1 from Nitratiruptor sp. (strain SB155-2).